We begin with the raw amino-acid sequence, 1138 residues long: Mastermind-like protein 3 (1138 aa).

Residues 37–48 are compositionally biased toward polar residues; the sequence is PNSTPAAPSSNH. 6 disordered regions span residues 37 to 68, 119 to 148, 169 to 188, 207 to 237, 334 to 480, and 503 to 547; these read PNSTPAAPSSNHPAAGGCGGSGGPGGGSAAVP, EQRAKKSGAGTGKQQHPSKPQQDAEAASAE, RSPLNGDQQNGACDGNFSPT, PSNMPLPSASPLHQLDLKPSLPLQNSGTHTP, EEKK…QRAK, and QQQQ…PQAF. Residues 52–64 are compositionally biased toward gly residues; it reads GGCGGSGGPGGGS. 2 stretches are compositionally biased toward polar residues: residues 130–139 and 173–188; these read GKQQHPSKPQ and NGDQQNGACDGNFSPT. Composition is skewed to polar residues over residues 343-359 and 372-394; these read QPATETPLSQESASVKS and GSPQARPSSSGPPFSTVSTATSL. Over residues 395-411 the composition is skewed to low complexity; the sequence is PSVASTPAAPNPASSPA. Positions 414-426 are enriched in polar residues; that stretch reads AVQSPQTPNQAHT. Over residues 467–480 the composition is skewed to low complexity; the sequence is QLKQMAAQQQQRAK. Lys-603 is modified (N6-acetyllysine). Disordered regions lie at residues 615 to 662, 691 to 721, 968 to 991, 1024 to 1084, and 1090 to 1109; these read RMTP…PRAH, HGQEQHPVGLPRTTGPMQSSVPPGSGGMVSG, LQGMPGRTSGELGPFNNGASYPLQ, AAMG…SQAY, and QDVSYNYSGDGAGGSFPGLP. Residues 633 to 649 show a composition bias toward low complexity; sequence QQQQQQQQQQQQQQQQQ. Residues 1064–1084 show a composition bias toward polar residues; sequence PPAQQQIPSGSFAPSSQSQAY.

It belongs to the mastermind family. As to quaternary structure, interacts through its N-terminal region with the ankyrin repeat region of the Notch proteins NOTCH1, NOTCH2, NOTCH3 and NOTCH4. Forms a DNA-binding complex with Notch proteins and RBPSUH/RBP-J kappa.

The protein resides in the nucleus speckle. In terms of biological role, acts as a transcriptional coactivator for NOTCH proteins. Has been shown to amplify NOTCH-induced transcription of HES1. This chain is Mastermind-like protein 3, found in Homo sapiens (Human).